We begin with the raw amino-acid sequence, 208 residues long: LexA repressor (208 aa).

The H-T-H motif DNA-binding region spans 29–49 (VREICGAVGLSSTSTVHGHIN). Active-site for autocatalytic cleavage activity residues include Ser-129 and Lys-167.

The protein belongs to the peptidase S24 family. In terms of assembly, homodimer.

It carries out the reaction Hydrolysis of Ala-|-Gly bond in repressor LexA.. Represses a number of genes involved in the response to DNA damage (SOS response), including recA and lexA. In the presence of single-stranded DNA, RecA interacts with LexA causing an autocatalytic cleavage which disrupts the DNA-binding part of LexA, leading to derepression of the SOS regulon and eventually DNA repair. The protein is LexA repressor of Limosilactobacillus fermentum (strain NBRC 3956 / LMG 18251) (Lactobacillus fermentum).